The sequence spans 159 residues: Phosphopantetheine adenylyltransferase (159 aa).

Serine 9 is a substrate binding site. ATP is bound by residues 9-10 (SF) and histidine 17. Substrate is bound by residues lysine 41, leucine 73, and arginine 87. ATP contacts are provided by residues 88 to 90 (GLR), glutamate 98, and 123 to 129 (YSYVSSS).

Belongs to the bacterial CoaD family. In terms of assembly, homohexamer. It depends on Mg(2+) as a cofactor.

The protein resides in the cytoplasm. It catalyses the reaction (R)-4'-phosphopantetheine + ATP + H(+) = 3'-dephospho-CoA + diphosphate. It functions in the pathway cofactor biosynthesis; coenzyme A biosynthesis; CoA from (R)-pantothenate: step 4/5. Reversibly transfers an adenylyl group from ATP to 4'-phosphopantetheine, yielding dephospho-CoA (dPCoA) and pyrophosphate. The protein is Phosphopantetheine adenylyltransferase of Shouchella clausii (strain KSM-K16) (Alkalihalobacillus clausii).